The sequence spans 257 residues: MLILISPAKTLDYQSPLATTRYTQPELLEYSQQLIGIARKLTAPQIGKLMSISDKLADLNATRFHDWHPDFTPQNARQAILAFKGDVYTGLQAETLTEDDFDFAQRHLRMLSGLYGVLRPLDLMQPYRLEMGIRLENPRGKDLYQFWGETITEKLNQALQAQGDDIVINLVSDEYFKSVKTQKLQGQLIKPVFLDEKNGKFKVISFYAKKARGLMSRYIIENRLTQPEQLKAFNSEGYFFDAEASEKGELVFKRHEQ.

This sequence belongs to the UPF0246 family.

The polypeptide is UPF0246 protein KPK_4750 (Klebsiella pneumoniae (strain 342)).